A 427-amino-acid chain; its full sequence is Serine hydroxymethyltransferase (427 aa).

(6S)-5,6,7,8-tetrahydrofolate is bound by residues leucine 122 and 126 to 128 (GHL). The residue at position 231 (lysine 231) is an N6-(pyridoxal phosphate)lysine. 355–357 (SPF) serves as a coordination point for (6S)-5,6,7,8-tetrahydrofolate.

Belongs to the SHMT family. Homodimer. The cofactor is pyridoxal 5'-phosphate.

It localises to the cytoplasm. The catalysed reaction is (6R)-5,10-methylene-5,6,7,8-tetrahydrofolate + glycine + H2O = (6S)-5,6,7,8-tetrahydrofolate + L-serine. It participates in one-carbon metabolism; tetrahydrofolate interconversion. The protein operates within amino-acid biosynthesis; glycine biosynthesis; glycine from L-serine: step 1/1. Its function is as follows. Catalyzes the reversible interconversion of serine and glycine with tetrahydrofolate (THF) serving as the one-carbon carrier. This reaction serves as the major source of one-carbon groups required for the biosynthesis of purines, thymidylate, methionine, and other important biomolecules. Also exhibits THF-independent aldolase activity toward beta-hydroxyamino acids, producing glycine and aldehydes, via a retro-aldol mechanism. This Nostoc punctiforme (strain ATCC 29133 / PCC 73102) protein is Serine hydroxymethyltransferase.